The primary structure comprises 106 residues: Small cardioactive peptide-related peptide (106 aa).

The first 20 residues, 1 to 20, serve as a signal peptide directing secretion; the sequence is MFCKHLSFVAITICFLLVLA. Positions 21–41 are cleaved as a propeptide — amino-terminal spacer peptide; it reads KTENEIQQKNIKFDQRTWRNM. Gln-52 is modified (glutamine amide). Positions 55 to 106 are cleaved as a propeptide — carboxy-terminal spacer peptide; that stretch reads SDNQPDYTCCGMPLTKYVGICPIGMECCPGLKKVLQKSGQRTIYSVCVADAY.

In terms of tissue distribution, expression is seen in the peripheral and central nervous systems in tissues such as the brain, the inferior buccal ganglion, the gastric ganglion, the olfactory lobe, the peduncle lobe and the optic lobe. Expression in the brain is distributed in the median inferior frontal lobe, the superior buccal lobe, the prebranchial lobe and the pedal lobe. Not expressed in the vasomotor lobe or the palliovisceral lobe that controls the cardiac system.

It is found in the secreted. In terms of biological role, evokes contractions in the radula protractor muscle, and may regulate feeding behavior and gut motility by controlling muscle contraction of the buccal mass. The polypeptide is Small cardioactive peptide-related peptide (Octopus vulgaris (Common octopus)).